A 413-amino-acid chain; its full sequence is Serine hydroxymethyltransferase (413 aa).

(6S)-5,6,7,8-tetrahydrofolate contacts are provided by residues leucine 117 and 121–123; that span reads GHL. Lysine 226 bears the N6-(pyridoxal phosphate)lysine mark. Residue 349–351 coordinates (6S)-5,6,7,8-tetrahydrofolate; that stretch reads SPF.

It belongs to the SHMT family. In terms of assembly, homodimer. Requires pyridoxal 5'-phosphate as cofactor.

The protein resides in the cytoplasm. It catalyses the reaction (6R)-5,10-methylene-5,6,7,8-tetrahydrofolate + glycine + H2O = (6S)-5,6,7,8-tetrahydrofolate + L-serine. It functions in the pathway one-carbon metabolism; tetrahydrofolate interconversion. Its pathway is amino-acid biosynthesis; glycine biosynthesis; glycine from L-serine: step 1/1. Catalyzes the reversible interconversion of serine and glycine with tetrahydrofolate (THF) serving as the one-carbon carrier. This reaction serves as the major source of one-carbon groups required for the biosynthesis of purines, thymidylate, methionine, and other important biomolecules. Also exhibits THF-independent aldolase activity toward beta-hydroxyamino acids, producing glycine and aldehydes, via a retro-aldol mechanism. The protein is Serine hydroxymethyltransferase of Listeria monocytogenes serotype 4b (strain F2365).